Here is a 103-residue protein sequence, read N- to C-terminus: MLCVTTSDIIGREITETLGVVTGNVVQSKHVGRDIMAGFKTIFGGEIRGYTEMLTEAREEALNRAIADAQSQGADAIVNLRFTTSAIMQGASEILAYGTAVKL.

It belongs to the UPF0145 family.

The protein is UPF0145 protein PBPRB0184 of Photobacterium profundum (strain SS9).